A 585-amino-acid chain; its full sequence is Amyloid protein-binding protein 2 (585 aa).

8 TPR repeats span residues 50-83 (QGRL…HHCF), 120-153 (IQVG…CTLH), 206-239 (AALY…ITAG), 288-321 (SDTL…RQSV), 333-367 (HEDL…ITHI), 429-462 (AKHY…KEQL), 471-505 (ALSV…GKKL), and 514-547 (EYDY…NRLR).

Component of a CRL2 E3 ubiquitin-protein ligase complex, also named ECS (Elongin BC-CUL2/5-SOCS-box protein) complex, composed of CUL2, Elongin BC (ELOB and ELOC), RBX1 and substrate-specific adapter APPBP2. Interacts with APP; APP interaction inhibits the E3 ubiquitin-protein ligase activity of the CRL2(APPBP2) complex. In terms of processing, rapidly degraded by the proteasome upon overexpression of a C-terminal fragment of APP.

It localises to the nucleus. It is found in the cytoplasm. The protein localises to the cytoskeleton. The protein resides in the membrane. It participates in protein modification; protein ubiquitination. With respect to regulation, E3 ubiquitin-protein ligase activity of the CRL2(APPBP2) complex is inhibited by APP. In terms of biological role, substrate-recognition component of a Cul2-RING (CRL2) E3 ubiquitin-protein ligase complex of the DesCEND (destruction via C-end degrons) pathway, which recognizes a C-degron located at the extreme C terminus of target proteins, leading to their ubiquitination and degradation. The C-degron recognized by the DesCEND pathway is usually a motif of less than ten residues and can be present in full-length proteins, truncated proteins or proteolytically cleaved forms. The CRL2(APPBP2) complex specifically recognizes proteins with a -Arg-Xaa-Xaa-Gly degron at the C-terminus, leading to their ubiquitination and degradation. The CRL2(APPBP2) complex mediates ubiquitination and degradation of truncated SELENOV selenoproteins produced by failed UGA/Sec decoding, which end with a -Arg-Xaa-Xaa-Gly degron. May play a role in intracellular protein transport: may be involved in the translocation of APP along microtubules toward the cell surface. This Homo sapiens (Human) protein is Amyloid protein-binding protein 2.